We begin with the raw amino-acid sequence, 1083 residues long: Error-prone DNA polymerase (1083 aa).

It belongs to the DNA polymerase type-C family. DnaE2 subfamily.

It is found in the cytoplasm. The enzyme catalyses DNA(n) + a 2'-deoxyribonucleoside 5'-triphosphate = DNA(n+1) + diphosphate. Its function is as follows. DNA polymerase involved in damage-induced mutagenesis and translesion synthesis (TLS). It is not the major replicative DNA polymerase. This Xanthomonas axonopodis pv. citri (strain 306) protein is Error-prone DNA polymerase.